Reading from the N-terminus, the 682-residue chain is Potassium-transporting ATPase ATP-binding subunit (682 aa).

4 consecutive transmembrane segments (helical) span residues 35–55, 62–82, 219–239, and 254–274; these read VMFV…AMAA, TGFT…ANFA, IALT…TVTL, and VLVA…LSAI. The 4-aspartylphosphate intermediate role is filled by Asp-307. Residues Asp-344, Glu-348, 377 to 384, and Lys-395 each bind ATP; that span reads FSAQTRMS. Positions 518 and 522 each coordinate Mg(2+). The next 3 membrane-spanning stretches (helical) occupy residues 577–597, 616–636, and 656–676; these read TFSI…AFAA, AILS…PLAL, and IYGV…DMLL.

It belongs to the cation transport ATPase (P-type) (TC 3.A.3) family. Type IA subfamily. As to quaternary structure, the system is composed of three essential subunits: KdpA, KdpB and KdpC.

It localises to the cell inner membrane. It carries out the reaction K(+)(out) + ATP + H2O = K(+)(in) + ADP + phosphate + H(+). Its function is as follows. Part of the high-affinity ATP-driven potassium transport (or Kdp) system, which catalyzes the hydrolysis of ATP coupled with the electrogenic transport of potassium into the cytoplasm. This subunit is responsible for energy coupling to the transport system and for the release of the potassium ions to the cytoplasm. The polypeptide is Potassium-transporting ATPase ATP-binding subunit (Erwinia tasmaniensis (strain DSM 17950 / CFBP 7177 / CIP 109463 / NCPPB 4357 / Et1/99)).